The following is a 209-amino-acid chain: Protein GrpE (209 aa).

A compositionally biased stretch (polar residues) spans 1–13 (MSNDSSKAKQNQV). Residues 1–27 (MSNDSSKAKQNQVDEAVEGEIITDNEN) form a disordered region. Over residues 15–27 (EAVEGEIITDNEN) the composition is skewed to acidic residues.

Belongs to the GrpE family. Homodimer.

The protein resides in the cytoplasm. Functionally, participates actively in the response to hyperosmotic and heat shock by preventing the aggregation of stress-denatured proteins, in association with DnaK and GrpE. It is the nucleotide exchange factor for DnaK and may function as a thermosensor. Unfolded proteins bind initially to DnaJ; upon interaction with the DnaJ-bound protein, DnaK hydrolyzes its bound ATP, resulting in the formation of a stable complex. GrpE releases ADP from DnaK; ATP binding to DnaK triggers the release of the substrate protein, thus completing the reaction cycle. Several rounds of ATP-dependent interactions between DnaJ, DnaK and GrpE are required for fully efficient folding. The sequence is that of Protein GrpE from Shewanella sediminis (strain HAW-EB3).